The following is a 160-amino-acid chain: ATP synthase subunit delta, mitochondrial (160 aa).

Residues 1–22 (MLRSIIGKSASRSLNFVAKRSY) constitute a mitochondrion transit peptide.

The protein belongs to the ATPase epsilon chain family. F-type ATPases have 2 components, CF(1) - the catalytic core - and CF(0) - the membrane proton channel. CF(1) has five subunits: alpha(3), beta(3), gamma(1), delta(1), epsilon(1). CF(0) has three main subunits: a, b and c.

It is found in the mitochondrion. The protein localises to the mitochondrion inner membrane. Mitochondrial membrane ATP synthase (F(1)F(0) ATP synthase or Complex V) produces ATP from ADP in the presence of a proton gradient across the membrane which is generated by electron transport complexes of the respiratory chain. F-type ATPases consist of two structural domains, F(1) - containing the extramembraneous catalytic core, and F(0) - containing the membrane proton channel, linked together by a central stalk and a peripheral stalk. During catalysis, ATP turnover in the catalytic domain of F(1) is coupled via a rotary mechanism of the central stalk subunits to proton translocation. Part of the complex F(1) domain and of the central stalk which is part of the complex rotary element. Rotation of the central stalk against the surrounding alpha(3)beta(3) subunits leads to hydrolysis of ATP in three separate catalytic sites on the beta subunits. The sequence is that of ATP synthase subunit delta, mitochondrial (ATP16) from Saccharomyces cerevisiae (strain ATCC 204508 / S288c) (Baker's yeast).